A 353-amino-acid polypeptide reads, in one-letter code: UPF0283 membrane protein YpsIP31758_1791 (353 aa).

A run of 3 helical transmembrane segments spans residues 71-91, 101-121, and 214-234; these read MVTA…VQWV, IALG…GSVV, and ESAL…FIAW.

The protein belongs to the UPF0283 family.

The protein resides in the cell inner membrane. The polypeptide is UPF0283 membrane protein YpsIP31758_1791 (Yersinia pseudotuberculosis serotype O:1b (strain IP 31758)).